The primary structure comprises 306 residues: tRNA dimethylallyltransferase (306 aa).

Residue 11–18 (GPTAVGKS) participates in ATP binding. 13-18 (TAVGKS) serves as a coordination point for substrate. Residues 35 to 38 (DSIQ) form an interaction with substrate tRNA region.

It belongs to the IPP transferase family. In terms of assembly, monomer. The cofactor is Mg(2+).

It carries out the reaction adenosine(37) in tRNA + dimethylallyl diphosphate = N(6)-dimethylallyladenosine(37) in tRNA + diphosphate. In terms of biological role, catalyzes the transfer of a dimethylallyl group onto the adenine at position 37 in tRNAs that read codons beginning with uridine, leading to the formation of N6-(dimethylallyl)adenosine (i(6)A). This chain is tRNA dimethylallyltransferase, found in Borreliella burgdorferi (strain ATCC 35210 / DSM 4680 / CIP 102532 / B31) (Borrelia burgdorferi).